The following is a 92-amino-acid chain: Large ribosomal subunit protein bL27 (92 aa).

Residues 1–8 constitute a propeptide that is removed on maturation; sequence MLMNLQFF. The tract at residues 11–30 is disordered; that stretch reads HKGGGSTANGRDSAGRRLGA.

This sequence belongs to the bacterial ribosomal protein bL27 family. In terms of processing, the N-terminus is cleaved by ribosomal processing cysteine protease Prp.

The polypeptide is Large ribosomal subunit protein bL27 (Lactiplantibacillus plantarum (strain ATCC BAA-793 / NCIMB 8826 / WCFS1) (Lactobacillus plantarum)).